Here is a 97-residue protein sequence, read N- to C-terminus: uncharacterized protein (97 aa).

Residues 72 to 97 form a disordered region; the sequence is TVERKRSEHTNSRKKDPSAYTWSDVK. The segment covering 73–88 has biased composition (basic and acidic residues); it reads VERKRSEHTNSRKKDP.

This sequence belongs to the chlamydial CPn_0121/CT_031/TC_0300 family.

This is an uncharacterized protein from Chlamydia pneumoniae (Chlamydophila pneumoniae).